Here is a 24-residue protein sequence, read N- to C-terminus: uncharacterized protein (24 aa).

Over 1–3 (MKK) the chain is Cytoplasmic. A helical membrane pass occupies residues 4 to 24 (TTIIMMGVAIIVVLGTELGWW).

Its subcellular location is the cell inner membrane. This is an uncharacterized protein from Escherichia coli (strain K12).